The primary structure comprises 39 residues: Potassium channel toxin alpha-KTx 2.9 (39 aa).

3 disulfides stabilise this stretch: C7–C29, C13–C34, and C17–C36. Asparagine amide is present on N39.

It belongs to the short scorpion toxin superfamily. Potassium channel inhibitor family. Alpha-KTx 02 subfamily. As to expression, expressed by the venom gland.

The protein resides in the secreted. In terms of biological role, blocks Kv1.3/KCNA3 voltage-gated potassium channels of human T-lymphocytes (Kd=0.25 nM). The protein is Potassium channel toxin alpha-KTx 2.9 of Centruroides elegans (Bark scorpion).